The primary structure comprises 486 residues: Protein nucleotidyltransferase YdiU (486 aa).

8 residues coordinate ATP: Gly89, Gly91, Arg92, Lys112, Asp124, Gly125, Arg175, and Arg182. Residue Asp251 is the Proton acceptor of the active site. Residues Asn252 and Asp261 each coordinate Mg(2+). Residue Asp261 coordinates ATP.

This sequence belongs to the SELO family. Mg(2+) serves as cofactor. Mn(2+) is required as a cofactor.

The catalysed reaction is L-seryl-[protein] + ATP = 3-O-(5'-adenylyl)-L-seryl-[protein] + diphosphate. The enzyme catalyses L-threonyl-[protein] + ATP = 3-O-(5'-adenylyl)-L-threonyl-[protein] + diphosphate. It carries out the reaction L-tyrosyl-[protein] + ATP = O-(5'-adenylyl)-L-tyrosyl-[protein] + diphosphate. It catalyses the reaction L-histidyl-[protein] + UTP = N(tele)-(5'-uridylyl)-L-histidyl-[protein] + diphosphate. The catalysed reaction is L-seryl-[protein] + UTP = O-(5'-uridylyl)-L-seryl-[protein] + diphosphate. The enzyme catalyses L-tyrosyl-[protein] + UTP = O-(5'-uridylyl)-L-tyrosyl-[protein] + diphosphate. Functionally, nucleotidyltransferase involved in the post-translational modification of proteins. It can catalyze the addition of adenosine monophosphate (AMP) or uridine monophosphate (UMP) to a protein, resulting in modifications known as AMPylation and UMPylation. In Shouchella clausii (strain KSM-K16) (Alkalihalobacillus clausii), this protein is Protein nucleotidyltransferase YdiU.